Reading from the N-terminus, the 180-residue chain is Vacuolar ATPase assembly protein VMA22 (180 aa).

Residues 16 to 37 (QLLGDLEELEGKRTVLNARVEE) adopt a coiled-coil conformation. Residues 92 to 101 (EEVGPREAGL) are compositionally biased toward basic and acidic residues. The tract at residues 92-122 (EEVGPREAGLRRRKGPTKTPEPESSEAPQDP) is disordered. Residues 153 to 176 (SLQNRIDWGRSQLRGLQEKLKQLE) adopt a coiled-coil conformation.

Accessory component of the multisubunit proton-transporting vacuolar (V)-ATPase protein pump. As to expression, expressed throughout the brain.

Its subcellular location is the endosome. The protein localises to the lysosome. The protein resides in the endoplasmic reticulum-Golgi intermediate compartment. It is found in the cytoplasmic vesicle. It localises to the COPI-coated vesicle. Its subcellular location is the endoplasmic reticulum. Accessory component of the proton-transporting vacuolar (V)-ATPase protein pump involved in intracellular iron homeostasis. In aerobic conditions, required for intracellular iron homeostasis, thus triggering the activity of Fe(2+) prolyl hydroxylase (PHD) enzymes, and leading to HIF1A hydroxylation and subsequent proteasomal degradation. Necessary for endolysosomal acidification and lysosomal degradation. May be involved in Golgi homeostasis. The protein is Vacuolar ATPase assembly protein VMA22 of Homo sapiens (Human).